A 717-amino-acid chain; its full sequence is UvrABC system protein C (717 aa).

The GIY-YIG domain maps to D16–V95. The UVR domain maps to D208–A243. Disordered regions lie at residues T517 to R555 and H696 to Q717. Basic and acidic residues-rich tracts occupy residues E541–R553 and E707–Q717.

This sequence belongs to the UvrC family. In terms of assembly, interacts with UvrB in an incision complex.

It is found in the cytoplasm. In terms of biological role, the UvrABC repair system catalyzes the recognition and processing of DNA lesions. UvrC both incises the 5' and 3' sides of the lesion. The N-terminal half is responsible for the 3' incision and the C-terminal half is responsible for the 5' incision. The sequence is that of UvrABC system protein C from Saccharopolyspora erythraea (strain ATCC 11635 / DSM 40517 / JCM 4748 / NBRC 13426 / NCIMB 8594 / NRRL 2338).